We begin with the raw amino-acid sequence, 250 residues long: 7-carboxy-7-deazaguanine synthase (250 aa).

Residues 15–17 (VQG) and R30 each bind substrate. Residues 21 to 250 (LIGLRQVFIR…PQTHRFMGQL (230 aa)) enclose the Radical SAM core domain. The [4Fe-4S] cluster site is built by C34, C38, and C41. T43 contacts Mg(2+). T96 serves as a coordination point for substrate. Residue G98 participates in S-adenosyl-L-methionine binding.

It belongs to the radical SAM superfamily. 7-carboxy-7-deazaguanine synthase family. As to quaternary structure, homodimer. [4Fe-4S] cluster serves as cofactor. The cofactor is S-adenosyl-L-methionine. Mg(2+) is required as a cofactor.

It catalyses the reaction 6-carboxy-5,6,7,8-tetrahydropterin + H(+) = 7-carboxy-7-deazaguanine + NH4(+). It functions in the pathway purine metabolism; 7-cyano-7-deazaguanine biosynthesis. Catalyzes the complex heterocyclic radical-mediated conversion of 6-carboxy-5,6,7,8-tetrahydropterin (CPH4) to 7-carboxy-7-deazaguanine (CDG), a step common to the biosynthetic pathways of all 7-deazapurine-containing compounds. The chain is 7-carboxy-7-deazaguanine synthase from Geobacter sulfurreducens (strain ATCC 51573 / DSM 12127 / PCA).